The following is a 385-amino-acid chain: Protein pelota homolog (385 aa).

A Glycyl lysine isopeptide (Lys-Gly) (interchain with G-Cter in SUMO2) cross-link involves residue K162. S374, S380, S381, and S382 each carry phosphoserine.

It belongs to the eukaryotic release factor 1 family. Pelota subfamily. As to quaternary structure, component of the Pelota-HBS1L complex, also named Dom34-Hbs1 complex, composed of PELO and HBS1L. Interacts with PINK1. Interacts with ABCE1. Interacts with CNOT4. A divalent metal cation is required as a cofactor. As to expression, ubiquitously expressed.

Its subcellular location is the cytoplasm. Its function is as follows. Component of the Pelota-HBS1L complex, a complex that recognizes stalled ribosomes and triggers the No-Go Decay (NGD) pathway. In the Pelota-HBS1L complex, PELO recognizes ribosomes stalled at the 3' end of an mRNA and engages stalled ribosomes by destabilizing mRNA in the mRNA channel. Following mRNA extraction from stalled ribosomes by the SKI complex, the Pelota-HBS1L complex promotes recruitment of ABCE1, which drives the disassembly of stalled ribosomes, followed by degradation of damaged mRNAs as part of the NGD pathway. As part of the PINK1-regulated signaling, upon mitochondrial damage is recruited to the ribosome/mRNA-ribonucleoprotein complex associated to mitochondrial outer membrane thereby enabling the recruitment of autophagy receptors and induction of mitophagy. This Mus musculus (Mouse) protein is Protein pelota homolog.